The sequence spans 572 residues: Glypican-5 (572 aa).

A signal peptide spans 1–24 (MDARTWRLGWRCLLLLALLGSTRS). N-linked (GlcNAc...) asparagine glycosylation is found at asparagine 120 and asparagine 237. A glycan (O-linked (Xyl...) (glycosaminoglycan) serine) is linked at serine 486. Residue asparagine 493 is glycosylated (N-linked (GlcNAc...) asparagine). O-linked (Xyl...) (glycosaminoglycan) serine glycans are attached at residues serine 495, serine 507, and serine 509. Residue asparagine 527 is glycosylated (N-linked (GlcNAc...) asparagine).

The protein belongs to the glypican family.

It localises to the cell membrane. Its subcellular location is the secreted. The protein localises to the extracellular space. In terms of biological role, cell surface proteoglycan that bears heparan sulfate. The chain is Glypican-5 (Gpc5) from Mus musculus (Mouse).